The following is a 337-amino-acid chain: Phosphate acyltransferase (337 aa).

The protein belongs to the PlsX family. In terms of assembly, homodimer. Probably interacts with PlsY.

The protein resides in the cytoplasm. The enzyme catalyses a fatty acyl-[ACP] + phosphate = an acyl phosphate + holo-[ACP]. It functions in the pathway lipid metabolism; phospholipid metabolism. Catalyzes the reversible formation of acyl-phosphate (acyl-PO(4)) from acyl-[acyl-carrier-protein] (acyl-ACP). This enzyme utilizes acyl-ACP as fatty acyl donor, but not acyl-CoA. The polypeptide is Phosphate acyltransferase (Latilactobacillus sakei subsp. sakei (strain 23K) (Lactobacillus sakei subsp. sakei)).